The chain runs to 277 residues: Sulfur carrier protein FdhD (277 aa).

Cys121 functions as the Cysteine persulfide intermediate in the catalytic mechanism. 260 to 265 contacts Mo-bis(molybdopterin guanine dinucleotide); sequence FCKPGR.

The protein belongs to the FdhD family.

Its subcellular location is the cytoplasm. In terms of biological role, required for formate dehydrogenase (FDH) activity. Acts as a sulfur carrier protein that transfers sulfur from IscS to the molybdenum cofactor prior to its insertion into FDH. The sequence is that of Sulfur carrier protein FdhD from Escherichia coli O81 (strain ED1a).